The primary structure comprises 805 residues: Leucine--tRNA ligase (805 aa).

Residues 41–52 (PYPSGAGLHVGH) carry the 'HIGH' region motif. Residues 577-581 (KMSKS) carry the 'KMSKS' region motif. Residue K580 coordinates ATP.

It belongs to the class-I aminoacyl-tRNA synthetase family.

It is found in the cytoplasm. It catalyses the reaction tRNA(Leu) + L-leucine + ATP = L-leucyl-tRNA(Leu) + AMP + diphosphate. The chain is Leucine--tRNA ligase from Staphylococcus aureus (strain USA300).